Here is a 170-residue protein sequence, read N- to C-terminus: J domain-containing protein (170 aa).

The J domain occupies 17 to 82 (DYYALLGCDE…SKRALYDKWR (66 aa)). A disordered region spans residues 101 to 170 (QQSMHWSKPN…VISKFRNYEI (70 aa)). The span at 110-120 (NTKDRMLEGEP) shows a compositional bias: basic and acidic residues. Low complexity-rich tracts occupy residues 121 to 135 (GKPSGPSSLGPSNPG) and 142 to 153 (GGAALWGRWGAG).

The chain is J domain-containing protein (jdp) from Manduca sexta (Tobacco hawkmoth).